The chain runs to 1453 residues: MFSFVDLRLLLLLGATALLTHGQEDIPEVSCIHNGLRVPNGETWKPDVCLICICHNGTAVCDGVLCKEDLDCPNPQKREGECCPFCPEEYVSPDAEVIGVEGPKGDPGPQGPRGPVGPPGQDGIPGQPGLPGPPGPPGPPGPPGLGGNFASQMSYGYDEKSAGVSVPGPMGPSGPRGLPGPPGAPGPQGFQGPPGEPGEPGASGPMGPRGPPGPPGKNGDDGEAGKPGRPGERGPPGPQGARGLPGTAGLPGMKGHRGFSGLDGAKGDTGPAGPKGEPGSPGENGAPGQMGPRGLPGERGRPGPPGSAGARGNDGAVGAAGPPGPTGPTGPPGFPGAAGAKGEAGPQGARGSEGPQGVRGEPGPPGPAGAAGPAGNPGADGQPGAKGANGAPGIAGAPGFPGARGPSGPQGPSGAPGPKGNSGEPGAPGNKGDTGAKGEPGPAGVQGPPGPAGEEGKRGARGEPGPSGLPGPPGERGGPGSRGFPGADGVAGPKGPAGERGSPGPAGPKGSPGEAGRPGEAGLPGAKGLTGSPGSPGPDGKTGPPGPAGQDGRPGPAGPPGARGQAGVMGFPGPKGTAGEPGKAGERGVPGPPGAVGPAGKDGEAGAQGAPGPAGPAGERGEQGPAGSPGFQGLPGPAGPPGEAGKPGEQGVPGDLGAPGPSGARGERGFPGERGVQGPPGPAGPRGNNGAPGNDGAKGDTGAPGAPGSQGAPGLQGMPGERGAAGLPGPKGDRGDAGPKGADGSPGKDGVRGLTGPIGPPGPAGAPGDKGETGPSGPAGPTGARGAPGDRGEPGPPGPAGFAGPPGADGQPGAKGEPGDTGVKGDAGPPGPAGPAGPPGPIGNVGAPGPKGSRGAAGPPGATGFPGAAGRVGPPGPSGNAGPPGPPGPVGKEGGKGPRGETGPAGRPGEVGPPGPPGPAGEKGSPGADGPAGSPGTPGPQGIAGQRGVVGLPGQRGERGFPGLPGPSGEPGKQGPSGASGERGPPGPMGPPGLAGPPGESGREGSPGAEGSPGRDGAPGAKGDRGETGPAGPPGAPGAPGAPGPVGPAGKNGDRGETGPAGPAGPIGPAGARGPAGPQGPRGDKGETGEQGDRGIKGHRGFSGLQGPPGSPGSPGEQGPSGASGPAGPRGPPGSAGSPGKDGLNGLPGPIGPPGPRGRTGDSGPAGPPGPPGPPGPPGPPSGGYDFSFLPQPPQEKSQDGGRYYRADDANVVRDRDLEVDTTLKSLSQQIENIRSPEGSRKNPARTCRDLKMCHSDWKSGEYWIDPNQGCNLDAIKVYCNMETGQTCVFPTQPSVPQKNWYISPNPKEKKHVWFGESMTDGFQFEYGSEGSDPADVAIQLTFLRLMSTEASQNITYHCKNSVAYMDQQTGNLKKSLLLQGSNEIELRGEGNSRFTYSTLVDGCTSHTGTWGKTVIEYKTTKTSRLPIIDVAPLDIGAPDQEFGMDIGPACFV.

The N-terminal stretch at 1 to 22 (MFSFVDLRLLLLLGATALLTHG) is a signal peptide. A propeptide spans 23–151 (QEDIPEVSCI…PPGLGGNFAS (129 aa)) (N-terminal propeptide). A VWFC domain is found at 29 to 87 (VSCIHNGLRVPNGETWKPDVCLICICHNGTAVCDGVLCKEDLDCPNPQKREGECCPFCP). N-linked (GlcNAc...) asparagine glycosylation is present at Asn-56. The disordered stretch occupies residues 97–1206 (VIGVEGPKGD…KSQDGGRYYR (1110 aa)). Composition is skewed to pro residues over residues 109-118 (PQGPRGPVGP) and 128-143 (PGLP…PGPP). A Pyrrolidone carboxylic acid modification is found at Gln-152. The nonhelical region (N-terminal) stretch occupies residues 152–167 (QMSYGYDEKSAGVSVP). Lys-160 carries the post-translational modification Allysine. Ser-161 is modified (phosphoserine). The triple-helical region stretch occupies residues 168–1181 (GPMGPSGPRG…PGPPGPPGPP (1014 aa)). A 4-hydroxyproline mark is found at Pro-179, Pro-182, Pro-185, Pro-194, Pro-197, Pro-200, Pro-215, Pro-230, Pro-236, Pro-245, and Pro-251. The segment covering 187–206 (PQGFQGPPGEPGEPGASGPM) has biased composition (low complexity). Residues 218 to 232 (NGDDGEAGKPGRPGE) show a composition bias toward basic and acidic residues. The residue at position 254 (Lys-254) is a 5-hydroxylysine; alternate. An O-linked (Gal...) hydroxylysine; alternate glycan is attached at Lys-254. Ser-260 carries the phosphoserine modification. A 4-hydroxyproline mark is found at Pro-278, Pro-281, Pro-287, Pro-296, and Pro-302. Positions 307–320 (SAGARGNDGAVGAA) are enriched in low complexity. Pro residues predominate over residues 322–334 (PPGPTGPTGPPGF). 4-hydroxyproline occurs at positions 323, 332, 335, 362, 365, 377, 383, 392, 398, 401, and 416. Low complexity predominate over residues 335–361 (PGAAGAKGEAGPQGARGSEGPQGVRGE). Positions 368-418 (AGAAGPAGNPGADGQPGAKGANGAPGIAGAPGFPGARGPSGPQGPSGAPGP) are enriched in low complexity. 5-hydroxylysine is present on Lys-419. 8 positions are modified to 4-hydroxyproline: Pro-425, Pro-428, Pro-440, Pro-449, Pro-464, Pro-470, Pro-479, and Pro-485. A compositionally biased stretch (gly residues) spans 474–483 (GERGGPGSRG). Residue Lys-494 is modified to 5-hydroxylysine. 28 positions are modified to 4-hydroxyproline: Pro-503, Pro-512, Pro-518, Pro-524, Pro-533, Pro-536, Pro-545, Pro-554, Pro-560, Pro-572, Pro-581, Pro-590, Pro-593, Pro-611, Pro-629, Pro-635, Pro-641, Pro-647, Pro-653, Pro-659, Pro-671, Pro-680, Pro-692, Pro-704, Pro-707, Pro-713, Pro-719, and Pro-728. The span at 527–566 (KGLTGSPGSPGPDGKTGPPGPAGQDGRPGPAGPPGARGQA) shows a compositional bias: low complexity. Positions 623-650 (QGPAGSPGFQGLPGPAGPPGEAGKPGEQ) are enriched in low complexity. Composition is skewed to low complexity over residues 685–695 (PRGNNGAPGND) and 703–716 (APGA…PGLQ). Positions 734–736 (RGD) match the Cell attachment site motif. Lys-740 bears the 5-hydroxylysine mark. Pro-746, Pro-761, and Pro-767 each carry 4-hydroxyproline. Positions 773-787 (TGPSGPAGPTGARGA) are enriched in low complexity. Ser-776 bears the Phosphoserine mark. 8 positions are modified to 4-hydroxyproline: Pro-788, Pro-794, Pro-797, Pro-806, Pro-812, Pro-830, Pro-839, and Pro-848. Over residues 800–815 (AGFAGPPGADGQPGAK) the composition is skewed to low complexity. Residues 829-841 (PPGPAGPAGPPGP) are compositionally biased toward pro residues. Positions 842–872 (IGNVGAPGPKGSRGAAGPPGATGFPGAAGRV) are enriched in low complexity. Lys-851 carries the 5-hydroxylysine modification. 4-hydroxyproline is present on residues Pro-860 and Pro-866. Pro-874 is modified (3-hydroxyproline). 4-hydroxyproline occurs at positions 875, 884, 887, 908, 917, 926, 935, 953, 962, 965, 971, 986, 992, 998, 1007, and 1013. The segment covering 901-910 (ETGPAGRPGE) has biased composition (low complexity). The span at 920-935 (AGEKGSPGADGPAGSP) shows a compositional bias: low complexity. Over residues 985 to 995 (PPGPMGPPGLA) the composition is skewed to pro residues. Residues 997-1012 (PPGESGREGSPGAEGS) are compositionally biased toward low complexity. Position 1022 is a 5-hydroxylysine (Lys-1022). Residues 1031–1046 (AGPPGAPGAPGAPGPV) show a composition bias toward pro residues. 3 positions are modified to 4-hydroxyproline: Pro-1034, Pro-1037, and Pro-1040. The segment covering 1067 to 1081 (IGPAGARGPAGPQGP) has biased composition (low complexity). A Cell attachment site motif is present at residues 1082 to 1084 (RGD). Basic and acidic residues predominate over residues 1082–1096 (RGDKGETGEQGDRGI). Residue Lys-1085 is modified to 5-hydroxylysine. Lys-1097 carries the post-translational modification 5-hydroxylysine; alternate. O-linked (Gal...) hydroxylysine; alternate glycosylation is present at Lys-1097. A compositionally biased stretch (low complexity) spans 1102-1148 (FSGLQGPPGSPGSPGEQGPSGASGPAGPRGPPGSAGSPGKDGLNGLP). 4-hydroxyproline occurs at positions 1109, 1112, 1115, 1133, and 1148. Pro-1153 bears the 3-hydroxyproline mark. A 4-hydroxyproline modification is found at Pro-1154. Residues 1166–1181 (AGPPGPPGPPGPPGPP) are compositionally biased toward pro residues. The residue at position 1168 (Pro-1168) is a 3-hydroxyproline. Residue Pro-1169 is modified to 4-hydroxyproline. Pro-1171 bears the 3-hydroxyproline mark. Position 1172 is a 4-hydroxyproline (Pro-1172). At Pro-1174 the chain carries 3-hydroxyproline. 4-hydroxyproline is present on residues Pro-1175, Pro-1178, and Pro-1181. The major antigenic determinant (of neutral salt-extracted rat skin collagen) stretch occupies residues 1176-1186 (GPPGPPSGGYD). The nonhelical region (C-terminal) stretch occupies residues 1182 to 1207 (SGGYDFSFLPQPPQEKSQDGGRYYRA). Lys-1197 carries the post-translational modification Allysine. Basic and acidic residues predominate over residues 1197-1206 (KSQDGGRYYR). A propeptide spans 1208 to 1453 (DDANVVRDRD…GMDIGPACFV (246 aa)) (C-terminal propeptide). The Fibrillar collagen NC1 domain occupies 1218 to 1453 (LEVDTTLKSL…GMDIGPACFV (236 aa)). 3 disulfides stabilise this stretch: Cys-1248/Cys-1280, Cys-1288/Cys-1451, and Cys-1359/Cys-1404. 5 residues coordinate Ca(2+): Asp-1266, Asn-1268, Gln-1269, Cys-1271, and Asp-1274. Asn-1354 is a glycosylation site (N-linked (GlcNAc...) asparagine).

The protein belongs to the fibrillar collagen family. Trimers of one alpha 2(I) and two alpha 1(I) chains. Interacts with MRC2. Interacts with TRAM2. Interacts with MFAP4 in a Ca (2+)-dependent manner. In terms of processing, contains mostly 4-hydroxyproline. Proline residues at the third position of the tripeptide repeating unit (G-X-Y) are hydroxylated in some or all of the chains. Contains 3-hydroxyproline at a few sites. This modification occurs on the first proline residue in the sequence motif Gly-Pro-Hyp, where Hyp is 4-hydroxyproline. Post-translationally, lysine residues at the third position of the tripeptide repeating unit (G-X-Y) are 5-hydroxylated in some or all of the chains. In terms of processing, O-glycosylated on hydroxylated lysine residues. The O-linked glycan consists of a Glc-Gal disaccharide. Forms the fibrils of tendon, ligaments and bones. In bones the fibrils are mineralized with calcium hydroxyapatite.

It is found in the secreted. The protein resides in the extracellular space. The protein localises to the extracellular matrix. Functionally, type I collagen is a member of group I collagen (fibrillar forming collagen). The polypeptide is Collagen alpha-1(I) chain (Col1a1) (Rattus norvegicus (Rat)).